The chain runs to 360 residues: Serine/threonine-protein kinase SAPK4 (360 aa).

The Protein kinase domain occupies 4–260; sequence YEAVRDIGSG…MKEIKSHPWF (257 aa). Residues 10-18 and K33 each bind ATP; that span reads IGSGNFGVA. Catalysis depends on D123, which acts as the Proton acceptor. Residues 303 to 360 are disordered; the sequence is TMPKSSRTGYWSDAGSDEEEKEEEERPEENEEEEEDEYDKRVKEVHASGELRMSSLRI. A compositionally biased stretch (acidic residues) spans 317–339; that stretch reads GSDEEEKEEEERPEENEEEEEDE. Residues 340–351 are compositionally biased toward basic and acidic residues; the sequence is YDKRVKEVHASG.

Belongs to the protein kinase superfamily. Ser/Thr protein kinase family. May be phosphorylated. In terms of tissue distribution, expressed in leaf blades, leaf sheaths and roots. Expressed in shoots and roots of young seedlings.

It catalyses the reaction L-seryl-[protein] + ATP = O-phospho-L-seryl-[protein] + ADP + H(+). The catalysed reaction is L-threonyl-[protein] + ATP = O-phospho-L-threonyl-[protein] + ADP + H(+). Activated by hyperosmotic stress. May play a role in signal transduction of hyperosmotic response. This Oryza sativa subsp. japonica (Rice) protein is Serine/threonine-protein kinase SAPK4 (SAPK4).